The chain runs to 499 residues: Probable alpha-L-arabinofuranosidase B (499 aa).

An N-terminal signal peptide occupies residues 1–18 (MFSRRNLVALGLAATVSA). Residues 19–335 (GPCDIYEAGD…ENIVAAKYVS (317 aa)) form a catalytic region. Cystine bridges form between C21/C31, C81/C86, and C176/C177. N83 carries an N-linked (GlcNAc...) asparagine glycan. N-linked (GlcNAc...) asparagine glycosylation occurs at N202. D219 contacts substrate. Catalysis depends on E221, which acts as the Nucleophile. Substrate is bound by residues N222, N223, and G296. D297 acts as the Proton donor in catalysis. The tract at residues 336 to 499 (GSLVSGPSFT…SFEIETAFAS (164 aa)) is ABD. The cysteines at positions 401 and 439 are disulfide-linked. Substrate-binding residues include H416, N418, F419, D435, H463, D465, L468, and D488.

Belongs to the glycosyl hydrolase 54 family.

It localises to the secreted. It carries out the reaction Hydrolysis of terminal non-reducing alpha-L-arabinofuranoside residues in alpha-L-arabinosides.. Its pathway is glycan metabolism; L-arabinan degradation. In terms of biological role, alpha-L-arabinofuranosidase involved in the degradation of arabinoxylan, a major component of plant hemicellulose. Able to hydrolyze 1,5-, 1,3- and 1,2-alpha-linkages not only in L-arabinofuranosyl oligosaccharides, but also in polysaccharides containing terminal non-reducing L-arabinofuranoses in side chains, like L-arabinan, arabinogalactan and arabinoxylan. The protein is Probable alpha-L-arabinofuranosidase B (abfB) of Aspergillus niger (strain ATCC MYA-4892 / CBS 513.88 / FGSC A1513).